Reading from the N-terminus, the 135-residue chain is Actin-related protein 2/3 complex subunit 5B (135 aa).

Belongs to the ARPC5 family. As to quaternary structure, component of the Arp2/3 complex composed of ARP2, ARP3, ARPC1/p41-ARC, ARPC2/p34-ARC, ARPC3/p21-ARC, ARPC4/p20-ARC and ARPC5/p16-ARC.

It is found in the cytoplasm. The protein resides in the cytoskeleton. The protein localises to the cell projection. Functionally, functions as a component of the Arp2/3 complex which is involved in regulation of actin polymerization and together with an activating nucleation-promoting factor (NPF) mediates the formation of branched actin networks. Arp2/3 complex plays a critical role in the control of cell morphogenesis via the modulation of cell polarity development. This chain is Actin-related protein 2/3 complex subunit 5B (ARPC5B), found in Arabidopsis thaliana (Mouse-ear cress).